The following is a 194-amino-acid chain: UPF0301 protein BT_0659 (194 aa).

This sequence belongs to the UPF0301 (AlgH) family.

This is UPF0301 protein BT_0659 from Bartonella tribocorum (strain CIP 105476 / IBS 506).